We begin with the raw amino-acid sequence, 757 residues long: Double zinc ribbon and ankyrin repeat-containing protein 1 (757 aa).

2 DZANK-type zinc fingers span residues 230-290 and 359-407; these read CAHC…VVCE and CSRC…GSCG. ANK repeat units follow at residues 631-662 and 666-695; these read ENRL…DPNC and QGRP…DIDQ.

As to quaternary structure, interacts with NINL. Associates with DYNC1H1 and multiple dynein intermediate and light chains as well as actin-binding proteins. In terms of tissue distribution, expressed in retina.

It localises to the cell projection. The protein resides in the cilium. Involved in vesicle transport in photoreceptor cells. This chain is Double zinc ribbon and ankyrin repeat-containing protein 1, found in Rattus norvegicus (Rat).